The following is a 123-amino-acid chain: uncharacterized protein (123 aa).

Residues 1-24 form the signal peptide; sequence MLPLCLTFLSFFLSLGGSFKAVMT. A run of 2 helical transmembrane segments spans residues 39–59 and 101–121; these read FWIF…ALAI and FGGI…ALTG.

It localises to the membrane. This is an uncharacterized protein from Saccharomyces cerevisiae (strain ATCC 204508 / S288c) (Baker's yeast).